A 202-amino-acid chain; its full sequence is LexA repressor (202 aa).

A DNA-binding region (H-T-H motif) is located at residues 28-48; it reads RAEIAQRLGFRSPNAAEEHLK. Active-site for autocatalytic cleavage activity residues include Ser119 and Lys156.

It belongs to the peptidase S24 family. As to quaternary structure, homodimer.

The enzyme catalyses Hydrolysis of Ala-|-Gly bond in repressor LexA.. Functionally, represses a number of genes involved in the response to DNA damage (SOS response), including recA and lexA. Binds to the 16 bp palindromic sequence 5'-CTGTATATATATACAG-3'. In the presence of single-stranded DNA, RecA interacts with LexA causing an autocatalytic cleavage which disrupts the DNA-binding part of LexA, leading to derepression of the SOS regulon and eventually DNA repair. The sequence is that of LexA repressor from Yersinia pseudotuberculosis serotype O:1b (strain IP 31758).